Reading from the N-terminus, the 116-residue chain is Ly-6/neurotoxin-like protein 1 (116 aa).

The first 20 residues, 1 to 20 (MTPLLTLFLVALIGLPLAQA), serve as a signal peptide directing secretion. Residues 21 to 105 (LDCHVCAYNG…FAAPATLALA (85 aa)) form the UPAR/Ly6 domain. Cystine bridges form between Cys-23-Cys-46, Cys-26-Cys-33, Cys-39-Cys-64, Cys-68-Cys-85, and Cys-86-Cys-91. A lipid anchor (GPI-anchor amidated asparagine) is attached at Asn-92. Residues 93–116 (GAGFAAPATLALAPILLATLWGLL) constitute a propeptide, removed in mature form.

In terms of assembly, interacts with nAChRs containing alpha-4:beta-2 (CHRNA4:CHRNB2) and alpha-7 (CHRNA7) subunits. Interacts with CHRNA4 probably in the endoplasmic reticulum prior to nAChR pentameric assembly. Interacts with KCNA2/Potassium voltage-gated channel subfamily A member 2.

The protein resides in the cell membrane. It localises to the cell projection. Its subcellular location is the dendrite. It is found in the endoplasmic reticulum. In terms of biological role, acts in different tissues through interaction to nicotinic acetylcholine receptors (nAChRs). The proposed role as modulator of nAChR activity seems to be dependent on the nAChR subtype and stoichiometry, and to involve an effect on nAChR trafficking and its cell surface expression, and on single channel properties of the nAChR inserted in the plasma membrane. Modulates functional properties of nicotinic acetylcholine receptors (nAChRs) to prevent excessive excitation, and hence neurodegeneration. Enhances desensitization by increasing both the rate and extent of desensitization of alpha-4:beta-2-containing nAChRs and slowing recovery from desensitization. Promotes large amplitude ACh-evoked currents through alpha-4:beta-2 nAChRs. Is involved in regulation of the nAChR pentameric assembly in the endoplasmic reticulum. Shifts stoichiometry from high sensitivity alpha-4(2):beta-2(3) to low sensitivity alpha-4(3):beta-2(2) nAChR. In vitro modulates alpha-3:beta-4-containing nAChRs. Reduces cell surface expression of (alpha-3:beta-4)(2):beta-4 and (alpha-3:beta-4)(2):alpha-5 nAChRs suggesting an interaction with nAChR alpha-3(-):(+)beta-4 subunit interfaces and an allosteric mode. Corresponding single channel effects characterized by decreased unitary conductance, altered burst proportions and enhanced desensitization/inactivation seem to depend on nAChR alpha:alpha subunit interfaces and are greater in (alpha-3:beta-2)(2):alpha-3 when compared to (alpha-3:beta-2)(2):alpha-5 nAChRs. Prevents plasticity in the primary visual cortex late in life. This is Ly-6/neurotoxin-like protein 1 from Saimiri boliviensis boliviensis (Bolivian squirrel monkey).